Consider the following 152-residue polypeptide: Superoxide dismutase [Cu-Zn] 2 (152 aa).

Asn9 and Asn33 each carry an N-linked (GlcNAc...) asparagine glycan. Residues His45, His47, and His62 each contribute to the Cu cation site. An intrachain disulfide couples Cys56 to Cys145. His62, His70, His79, and Asp82 together coordinate Zn(2+). N-linked (GlcNAc...) asparagine glycosylation occurs at Asn85. Cu cation is bound at residue His119.

Belongs to the Cu-Zn superoxide dismutase family. Requires Cu cation as cofactor. It depends on Zn(2+) as a cofactor. In terms of tissue distribution, expressed in fruits, leaves and pollen grains.

The protein resides in the cytoplasm. It localises to the endoplasmic reticulum. It carries out the reaction 2 superoxide + 2 H(+) = H2O2 + O2. Its activity is regulated as follows. Inhibited by KCN and H(2)O(2). Its function is as follows. Destroys radicals which are normally produced within the cells and which are toxic to biological systems. Probably involved in the protection against oxidative stress during pollen development. The sequence is that of Superoxide dismutase [Cu-Zn] 2 (OLE5) from Olea europaea (Common olive).